The chain runs to 577 residues: Sulfite reductase [NADPH] hemoprotein beta-component 2 (577 aa).

Cys441, Cys447, Cys486, and Cys490 together coordinate [4Fe-4S] cluster. A siroheme-binding site is contributed by Cys490.

This sequence belongs to the nitrite and sulfite reductase 4Fe-4S domain family. As to quaternary structure, alpha(8)-beta(8). The alpha component is a flavoprotein, the beta component is a hemoprotein. Requires siroheme as cofactor. The cofactor is [4Fe-4S] cluster.

The catalysed reaction is hydrogen sulfide + 3 NADP(+) + 3 H2O = sulfite + 3 NADPH + 4 H(+). It participates in sulfur metabolism; hydrogen sulfide biosynthesis; hydrogen sulfide from sulfite (NADPH route): step 1/1. Its function is as follows. Component of the sulfite reductase complex that catalyzes the 6-electron reduction of sulfite to sulfide. This is one of several activities required for the biosynthesis of L-cysteine from sulfate. This Pectobacterium carotovorum subsp. carotovorum (strain PC1) protein is Sulfite reductase [NADPH] hemoprotein beta-component 2.